Consider the following 1141-residue polypeptide: DNA-directed RNA polymerase subunit beta (1141 aa).

Belongs to the RNA polymerase beta chain family. As to quaternary structure, the RNAP catalytic core consists of 2 alpha, 1 beta, 1 beta' and 1 omega subunit. When a sigma factor is associated with the core the holoenzyme is formed, which can initiate transcription.

The catalysed reaction is RNA(n) + a ribonucleoside 5'-triphosphate = RNA(n+1) + diphosphate. In terms of biological role, DNA-dependent RNA polymerase catalyzes the transcription of DNA into RNA using the four ribonucleoside triphosphates as substrates. In Parafrankia sp. (strain EAN1pec), this protein is DNA-directed RNA polymerase subunit beta.